The following is an 858-amino-acid chain: MSASVAEPPPALSRKAEFKAAKAELLARFKSANHVTPLMHALSRATDDALRSLWQECGLPATLALVAVGGFGRGELSPHSDVDILVLLPDAHASELDERIERFIGMAWDLGLEIGSSVRTVDQCIEEASHDVTVQTSLLEARRIVGSTALFERFMLRYREALDARAFFQAKVLEMRQRHAKFQDTPYSLEPNVKESPGGLRDLQTILWIARAAGFGSSWRELDTRGLITDREARELRRNEGFLKTLRARLHVIAGRRQDILVFDLQTQAAESFGYQPTSAKRASEQLMRRYYWAAKAVTQLATILIQNIEAQLFPATSGVTRVLSPGRFVEKQGMLEIAADDVFERHPDAILEAFLLYEATRGVKGLSARTLRALYNSRDVMNNAWRRDPRNRHTFMQILQQPEGITHAFRLMNQTSVLGRYLLNFRRIVGQMQHDLYHVYTVDQHILMVLRNIRRFAVAEHAHEYPFCSQLIVNFERPWVLYVAALFHDIAKGRGGDHSALGMADARRFCREHGIEGDDAALVVWLVQHHLTMSQVAQKQDTSDPVVIKRFAELVGSERRLTALYLLTVADIRGTSPKVWNTWKGKLLEDLYRATLAVLGGAQPDAHSELKTRQEEALALLRLETVPPDAHRALWDQLDVGYFLRHDAADIAWQTRVLYRHVAADTAIVRARPSPVGDALQVLVYVKDRSDLFAGICAYFDRNGLSVLDARVNTTRHGYALDNFIVTQTEHDVQYRDIANLVEQQLAARLAESAPLPEPSKGRLSRLSRTFPITPRVDLRADERGQYYILSVSANDRPGLLYSIARVLAEHRVGVHAARINTLGERVEDVFMLDGTGLSDNRLQIQVETELLRAIAV.

Residues 1-324 (MSASVAEPPP…PATSGVTRVL (324 aa)) form a uridylyltransferase region. A uridylyl-removing region spans residues 325-681 (SPGRFVEKQG…ARPSPVGDAL (357 aa)). The region spanning 443–565 (VDQHILMVLR…VGSERRLTAL (123 aa)) is the HD domain. 2 ACT domains span residues 682 to 761 (QVLV…PEPS) and 790 to 858 (ILSV…AIAV).

This sequence belongs to the GlnD family. Requires Mg(2+) as cofactor.

It carries out the reaction [protein-PII]-L-tyrosine + UTP = [protein-PII]-uridylyl-L-tyrosine + diphosphate. The enzyme catalyses [protein-PII]-uridylyl-L-tyrosine + H2O = [protein-PII]-L-tyrosine + UMP + H(+). Its activity is regulated as follows. Uridylyltransferase (UTase) activity is inhibited by glutamine, while glutamine activates uridylyl-removing (UR) activity. In terms of biological role, modifies, by uridylylation and deuridylylation, the PII regulatory proteins (GlnB and homologs), in response to the nitrogen status of the cell that GlnD senses through the glutamine level. Under low glutamine levels, catalyzes the conversion of the PII proteins and UTP to PII-UMP and PPi, while under higher glutamine levels, GlnD hydrolyzes PII-UMP to PII and UMP (deuridylylation). Thus, controls uridylylation state and activity of the PII proteins, and plays an important role in the regulation of nitrogen assimilation and metabolism. The sequence is that of Bifunctional uridylyltransferase/uridylyl-removing enzyme from Burkholderia mallei (strain NCTC 10247).